A 519-amino-acid chain; its full sequence is Cytochrome P450 72C1 (519 aa).

A helical transmembrane segment spans residues 10–30 (VFLIGFLILILNWVWRAVNWV). Cysteine 467 serves as a coordination point for heme.

It belongs to the cytochrome P450 family. Requires heme as cofactor. In terms of tissue distribution, expressed in hypocotyls, roots, cotyledons, stamens and silique junctions.

Its subcellular location is the membrane. Functionally, atypical cytochrome P450 involved in brassinosteroids (BRs) inactivation and regulation of BRs homeostasis. Does not possess carbon 26 hydroxylase activity and may inactivate BRs by hydroxylation of carbons other than C-26. Acts in association with CYP734A1 to inactivate BRs and modulate photomorphogenesis. The polypeptide is Cytochrome P450 72C1 (CYP72C1) (Arabidopsis thaliana (Mouse-ear cress)).